A 185-amino-acid polypeptide reads, in one-letter code: Ribosome-recycling factor (185 aa).

The protein belongs to the RRF family.

Its subcellular location is the cytoplasm. Its function is as follows. Responsible for the release of ribosomes from messenger RNA at the termination of protein biosynthesis. May increase the efficiency of translation by recycling ribosomes from one round of translation to another. In Mycobacterium leprae (strain Br4923), this protein is Ribosome-recycling factor.